Reading from the N-terminus, the 443-residue chain is Glutamate--tRNA ligase 1 (443 aa).

The 'HIGH' region signature appears at 9–19 (PSPTGYLHVGN). The 'KMSKS' region signature appears at 238–242 (KISKR). Lysine 241 contributes to the ATP binding site.

The protein belongs to the class-I aminoacyl-tRNA synthetase family. Glutamate--tRNA ligase type 1 subfamily. As to quaternary structure, monomer.

The protein localises to the cytoplasm. The catalysed reaction is tRNA(Glu) + L-glutamate + ATP = L-glutamyl-tRNA(Glu) + AMP + diphosphate. Catalyzes the attachment of glutamate to tRNA(Glu) in a two-step reaction: glutamate is first activated by ATP to form Glu-AMP and then transferred to the acceptor end of tRNA(Glu). The polypeptide is Glutamate--tRNA ligase 1 (Ehrlichia ruminantium (strain Welgevonden)).